The following is a 220-amino-acid chain: Large ribosomal subunit protein uL3 (220 aa).

The disordered stretch occupies residues 113–143 (GTTKGHGYQGNIHKDGQRRGPMAHGSRYHRR).

The protein belongs to the universal ribosomal protein uL3 family. As to quaternary structure, part of the 50S ribosomal subunit. Forms a cluster with proteins L14 and L19.

One of the primary rRNA binding proteins, it binds directly near the 3'-end of the 23S rRNA, where it nucleates assembly of the 50S subunit. This is Large ribosomal subunit protein uL3 from Limosilactobacillus fermentum (strain NBRC 3956 / LMG 18251) (Lactobacillus fermentum).